A 217-amino-acid chain; its full sequence is Oxygen-insensitive NAD(P)H nitroreductase (217 aa).

FMN is bound at residue 10 to 14 (RHSTK). Residues Lys-14, Thr-41, Thr-67, Asn-71, Lys-74, and Arg-107 each coordinate NAD(+). Asn-71 contacts FMN. FMN-binding positions include 165-166 (EG) and 205-207 (KSR).

It belongs to the nitroreductase family. Homodimer. Requires FMN as cofactor.

Functionally, reduction of a variety of nitroaromatic compounds using NADH (and to lesser extent NADPH) as source of reducing equivalents; two electrons are transferred. This is Oxygen-insensitive NAD(P)H nitroreductase from Enterobacter cloacae.